The primary structure comprises 194 residues: Potassium-transporting ATPase KdpC subunit (194 aa).

Residues 12-34 traverse the membrane as a helical segment; the sequence is LFLLLLTGGVYPLLTTALGQWWF.

The protein belongs to the KdpC family. As to quaternary structure, the system is composed of three essential subunits: KdpA, KdpB and KdpC.

It localises to the cell inner membrane. Part of the high-affinity ATP-driven potassium transport (or Kdp) system, which catalyzes the hydrolysis of ATP coupled with the electrogenic transport of potassium into the cytoplasm. This subunit acts as a catalytic chaperone that increases the ATP-binding affinity of the ATP-hydrolyzing subunit KdpB by the formation of a transient KdpB/KdpC/ATP ternary complex. This chain is Potassium-transporting ATPase KdpC subunit, found in Salmonella heidelberg (strain SL476).